We begin with the raw amino-acid sequence, 286 residues long: Cbb3-type cytochrome c oxidase subunit CcoP (286 aa).

Helical transmembrane passes span 11–31 (FGLI…SSLI) and 62–82 (VGWI…FFFG). 2 Cytochrome c domains span residues 116–195 (ELVD…MAEL) and 205–286 (QLID…LSNR). Heme c-binding residues include C129, C132, H133, M174, C219, C222, H223, and M264.

This sequence belongs to the CcoP / FixP family. As to quaternary structure, component of the cbb3-type cytochrome c oxidase at least composed of CcoN, CcoO, CcoQ and CcoP. Heme c serves as cofactor.

It is found in the cell inner membrane. It participates in energy metabolism; oxidative phosphorylation. Functionally, C-type cytochrome. Part of the cbb3-type cytochrome c oxidase complex. CcoP subunit is required for transferring electrons from donor cytochrome c via its heme groups to CcoO subunit. From there, electrons are shuttled to the catalytic binuclear center of CcoN subunit where oxygen reduction takes place. The complex also functions as a proton pump. The polypeptide is Cbb3-type cytochrome c oxidase subunit CcoP (Helicobacter pylori (strain ATCC 700392 / 26695) (Campylobacter pylori)).